Here is a 387-residue protein sequence, read N- to C-terminus: Phosphoglycerate kinase (387 aa).

Substrate is bound by residues 21–23, arginine 36, 60–63, arginine 114, and arginine 147; these read DLN and HLGR. ATP contacts are provided by residues lysine 198, glutamate 313, and 339–342; that span reads GGDT.

The protein belongs to the phosphoglycerate kinase family. Monomer.

Its subcellular location is the cytoplasm. It catalyses the reaction (2R)-3-phosphoglycerate + ATP = (2R)-3-phospho-glyceroyl phosphate + ADP. The protein operates within carbohydrate degradation; glycolysis; pyruvate from D-glyceraldehyde 3-phosphate: step 2/5. In Baumannia cicadellinicola subsp. Homalodisca coagulata, this protein is Phosphoglycerate kinase.